Here is a 185-residue protein sequence, read N- to C-terminus: Peptidyl-tRNA hydrolase (185 aa).

Y14 lines the tRNA pocket. The Proton acceptor role is filled by H19. The tRNA site is built by F64, N66, and N112.

The protein belongs to the PTH family. In terms of assembly, monomer.

The protein localises to the cytoplasm. The enzyme catalyses an N-acyl-L-alpha-aminoacyl-tRNA + H2O = an N-acyl-L-amino acid + a tRNA + H(+). Its function is as follows. Hydrolyzes ribosome-free peptidyl-tRNAs (with 1 or more amino acids incorporated), which drop off the ribosome during protein synthesis, or as a result of ribosome stalling. Catalyzes the release of premature peptidyl moieties from peptidyl-tRNA molecules trapped in stalled 50S ribosomal subunits, and thus maintains levels of free tRNAs and 50S ribosomes. This Levilactobacillus brevis (strain ATCC 367 / BCRC 12310 / CIP 105137 / JCM 1170 / LMG 11437 / NCIMB 947 / NCTC 947) (Lactobacillus brevis) protein is Peptidyl-tRNA hydrolase.